The sequence spans 1228 residues: DNA-directed RNA polymerase subunit beta'' (1228 aa).

Zn(2+) contacts are provided by Cys-222, Cys-296, Cys-303, and Cys-306.

Belongs to the RNA polymerase beta' chain family. RpoC2 subfamily. In terms of assembly, in plastids the minimal PEP RNA polymerase catalytic core is composed of four subunits: alpha, beta, beta', and beta''. When a (nuclear-encoded) sigma factor is associated with the core the holoenzyme is formed, which can initiate transcription. Zn(2+) is required as a cofactor.

The protein localises to the plastid. It is found in the chloroplast. The enzyme catalyses RNA(n) + a ribonucleoside 5'-triphosphate = RNA(n+1) + diphosphate. In terms of biological role, DNA-dependent RNA polymerase catalyzes the transcription of DNA into RNA using the four ribonucleoside triphosphates as substrates. In Gracilaria tenuistipitata var. liui (Red alga), this protein is DNA-directed RNA polymerase subunit beta''.